The following is a 260-amino-acid chain: MARTPLIAGNWKMNLDHLQAVATVQKLAFALPKEYYEKVDVAVTVPFTDLRSVQTLIEGDKLAITYGAQDVSQHEAGAYTGEISAQMLAKLGCTWVVVGHSERREYHGESSELVAVKAKAALNQGISPIVCVGEPLEIREAGTHVEYVVEQTRASLAGLTADDLAKTVIAYEPVWAIGTGKVASAADAQEVCAAIRNLIIELAGKEVAEGLRILYGGSVKAETVAEIVGQPDVDGGLVGGASLDGEAFAKLAANAATVVD.

10-12 is a binding site for substrate; that stretch reads NWK. His100 functions as the Electrophile in the catalytic mechanism. Glu172 serves as the catalytic Proton acceptor. Substrate contacts are provided by residues Gly178, Ser218, and 239 to 240; that span reads GG.

This sequence belongs to the triosephosphate isomerase family. As to quaternary structure, homodimer.

Its subcellular location is the cytoplasm. It catalyses the reaction D-glyceraldehyde 3-phosphate = dihydroxyacetone phosphate. It functions in the pathway carbohydrate biosynthesis; gluconeogenesis. Its pathway is carbohydrate degradation; glycolysis; D-glyceraldehyde 3-phosphate from glycerone phosphate: step 1/1. In terms of biological role, involved in the gluconeogenesis. Catalyzes stereospecifically the conversion of dihydroxyacetone phosphate (DHAP) to D-glyceraldehyde-3-phosphate (G3P). This chain is Triosephosphate isomerase, found in Corynebacterium diphtheriae (strain ATCC 700971 / NCTC 13129 / Biotype gravis).